Consider the following 148-residue polypeptide: Putative nickel-responsive regulator (148 aa).

His-88, His-99, His-101, and Cys-107 together coordinate Ni(2+).

This sequence belongs to the transcriptional regulatory CopG/NikR family. Ni(2+) is required as a cofactor.

Functionally, transcriptional regulator. The sequence is that of Putative nickel-responsive regulator from Helicobacter pylori (strain HPAG1).